Consider the following 289-residue polypeptide: Bifunctional protein FolD (289 aa).

NADP(+) contacts are provided by residues Gly165–Ser167 and Ser190.

This sequence belongs to the tetrahydrofolate dehydrogenase/cyclohydrolase family. Homodimer.

It carries out the reaction (6R)-5,10-methylene-5,6,7,8-tetrahydrofolate + NADP(+) = (6R)-5,10-methenyltetrahydrofolate + NADPH. The catalysed reaction is (6R)-5,10-methenyltetrahydrofolate + H2O = (6R)-10-formyltetrahydrofolate + H(+). The protein operates within one-carbon metabolism; tetrahydrofolate interconversion. Catalyzes the oxidation of 5,10-methylenetetrahydrofolate to 5,10-methenyltetrahydrofolate and then the hydrolysis of 5,10-methenyltetrahydrofolate to 10-formyltetrahydrofolate. The protein is Bifunctional protein FolD of Ralstonia nicotianae (strain ATCC BAA-1114 / GMI1000) (Ralstonia solanacearum).